Reading from the N-terminus, the 482-residue chain is Cysteine--tRNA ligase (482 aa).

Zn(2+) is bound at residue cysteine 29. The short motif at 31-41 (PTVYDFAHIGN) is the 'HIGH' region element. Cysteine 224, histidine 249, and glutamate 253 together coordinate Zn(2+). Residues 282-286 (KMSKS) carry the 'KMSKS' region motif. Lysine 285 is a binding site for ATP.

The protein belongs to the class-I aminoacyl-tRNA synthetase family. In terms of assembly, monomer. Requires Zn(2+) as cofactor.

The protein resides in the cytoplasm. The catalysed reaction is tRNA(Cys) + L-cysteine + ATP = L-cysteinyl-tRNA(Cys) + AMP + diphosphate. The chain is Cysteine--tRNA ligase from Nitrobacter hamburgensis (strain DSM 10229 / NCIMB 13809 / X14).